A 364-amino-acid chain; its full sequence is UDP-N-acetylglucosamine--N-acetylmuramyl-(pentapeptide) pyrophosphoryl-undecaprenol N-acetylglucosamine transferase (364 aa).

Residues 10–12, N128, R170, S199, I250, and Q295 each bind UDP-N-acetyl-alpha-D-glucosamine; that span reads TGG.

Belongs to the glycosyltransferase 28 family. MurG subfamily.

The protein resides in the cell inner membrane. The catalysed reaction is di-trans,octa-cis-undecaprenyl diphospho-N-acetyl-alpha-D-muramoyl-L-alanyl-D-glutamyl-meso-2,6-diaminopimeloyl-D-alanyl-D-alanine + UDP-N-acetyl-alpha-D-glucosamine = di-trans,octa-cis-undecaprenyl diphospho-[N-acetyl-alpha-D-glucosaminyl-(1-&gt;4)]-N-acetyl-alpha-D-muramoyl-L-alanyl-D-glutamyl-meso-2,6-diaminopimeloyl-D-alanyl-D-alanine + UDP + H(+). It participates in cell wall biogenesis; peptidoglycan biosynthesis. In terms of biological role, cell wall formation. Catalyzes the transfer of a GlcNAc subunit on undecaprenyl-pyrophosphoryl-MurNAc-pentapeptide (lipid intermediate I) to form undecaprenyl-pyrophosphoryl-MurNAc-(pentapeptide)GlcNAc (lipid intermediate II). The chain is UDP-N-acetylglucosamine--N-acetylmuramyl-(pentapeptide) pyrophosphoryl-undecaprenol N-acetylglucosamine transferase from Chlorobaculum tepidum (strain ATCC 49652 / DSM 12025 / NBRC 103806 / TLS) (Chlorobium tepidum).